A 293-amino-acid polypeptide reads, in one-letter code: Bifunctional protein FolD (293 aa).

Residues 165–167, Thr-192, and Val-233 each bind NADP(+); that span reads GRG.

Belongs to the tetrahydrofolate dehydrogenase/cyclohydrolase family. Homodimer.

The catalysed reaction is (6R)-5,10-methylene-5,6,7,8-tetrahydrofolate + NADP(+) = (6R)-5,10-methenyltetrahydrofolate + NADPH. It catalyses the reaction (6R)-5,10-methenyltetrahydrofolate + H2O = (6R)-10-formyltetrahydrofolate + H(+). Its pathway is one-carbon metabolism; tetrahydrofolate interconversion. Catalyzes the oxidation of 5,10-methylenetetrahydrofolate to 5,10-methenyltetrahydrofolate and then the hydrolysis of 5,10-methenyltetrahydrofolate to 10-formyltetrahydrofolate. The chain is Bifunctional protein FolD from Streptomyces griseus subsp. griseus (strain JCM 4626 / CBS 651.72 / NBRC 13350 / KCC S-0626 / ISP 5235).